A 166-amino-acid polypeptide reads, in one-letter code: Protein SprT (166 aa).

The region spanning 19-164 (RDALARANLK…CVRCGDTLVA (146 aa)) is the SprT-like domain. His-78 lines the Zn(2+) pocket. Glu-79 is a catalytic residue. His-82 contacts Zn(2+).

Belongs to the SprT family. Zn(2+) serves as cofactor.

It localises to the cytoplasm. In Cronobacter sakazakii (strain ATCC BAA-894) (Enterobacter sakazakii), this protein is Protein SprT.